A 396-amino-acid chain; its full sequence is Succinyl-diaminopimelate desuccinylase (396 aa).

Residue histidine 74 coordinates Zn(2+). Aspartate 76 is a catalytic residue. Zn(2+) is bound at residue aspartate 107. The active-site Proton acceptor is the glutamate 142. Zn(2+) is bound by residues glutamate 143, glutamate 171, and histidine 360.

It belongs to the peptidase M20A family. DapE subfamily. Homodimer. The cofactor is Zn(2+). Co(2+) serves as cofactor.

It catalyses the reaction N-succinyl-(2S,6S)-2,6-diaminopimelate + H2O = (2S,6S)-2,6-diaminopimelate + succinate. It functions in the pathway amino-acid biosynthesis; L-lysine biosynthesis via DAP pathway; LL-2,6-diaminopimelate from (S)-tetrahydrodipicolinate (succinylase route): step 3/3. In terms of biological role, catalyzes the hydrolysis of N-succinyl-L,L-diaminopimelic acid (SDAP), forming succinate and LL-2,6-diaminopimelate (DAP), an intermediate involved in the bacterial biosynthesis of lysine and meso-diaminopimelic acid, an essential component of bacterial cell walls. This Methylobacterium nodulans (strain LMG 21967 / CNCM I-2342 / ORS 2060) protein is Succinyl-diaminopimelate desuccinylase.